A 218-amino-acid chain; its full sequence is Antifreeze protein Maxi (218 aa).

The N-terminal stretch at 1-23 is a signal peptide; it reads MALSLFTVGQFIFLFWTISITEA.

Belongs to the type-I AFP family. Homodimer. Detected in blood serum (at protein level). Detected in liver.

It localises to the secreted. Contributes to protect fish blood from freezing at subzero sea water temperatures. Lowers the blood freezing point by about 1.1 degrees at a concentration of 0.1 mg/ml, and by about 1.5 degrees at a concentration of 0.2 mg/ml. Binds to nascent ice crystals and prevents further growth. The polypeptide is Antifreeze protein Maxi (Pseudopleuronectes americanus (Winter flounder)).